We begin with the raw amino-acid sequence, 663 residues long: Zinc finger protein GLI2 (663 aa).

The interval Ile-159–Pro-186 is disordered. The span at Ser-160 to Ser-182 shows a compositional bias: low complexity. 5 C2H2-type zinc fingers span residues Thr-234–His-259, Phe-267–His-294, His-300–His-324, Tyr-330–His-355, and Tyr-361–His-386. 4 disordered regions span residues Asp-374–Cys-440, Val-452–Val-481, Cys-544–Leu-578, and Ser-619–Leu-663. The segment covering His-386–Pro-402 has biased composition (basic and acidic residues). A compositionally biased stretch (low complexity) spans Ser-456–Ser-473. Polar residues-rich tracts occupy residues Gly-563–Leu-578 and Ser-619–Asp-647.

Belongs to the GLI C2H2-type zinc-finger protein family.

It localises to the nucleus. Its subcellular location is the cytoplasm. It is found in the cell projection. The protein resides in the cilium. Functionally, functions as a transcription regulator in the hedgehog (Hh) pathway. Functions as a transcriptional activator. May also function as transcriptional repressor. Binds to the DNA sequence 5'-GAACCACCCA-3'. Is involved in the smoothened (SHH) signaling pathway. Required for normal skeleton development. The protein is Zinc finger protein GLI2 of Gallus gallus (Chicken).